The following is a 125-amino-acid chain: Small ribosomal subunit protein uS13 (125 aa).

The segment at 92 to 125 is disordered; that stretch reads RRSLPARGQRTRTNARTRKGKRKTVAGKKKAGKK.

Belongs to the universal ribosomal protein uS13 family. In terms of assembly, part of the 30S ribosomal subunit. Forms a loose heterodimer with protein S19. Forms two bridges to the 50S subunit in the 70S ribosome.

In terms of biological role, located at the top of the head of the 30S subunit, it contacts several helices of the 16S rRNA. In the 70S ribosome it contacts the 23S rRNA (bridge B1a) and protein L5 of the 50S subunit (bridge B1b), connecting the 2 subunits; these bridges are implicated in subunit movement. Contacts the tRNAs in the A and P-sites. This chain is Small ribosomal subunit protein uS13, found in Chlorobaculum parvum (strain DSM 263 / NCIMB 8327) (Chlorobium vibrioforme subsp. thiosulfatophilum).